The chain runs to 203 residues: uncharacterized protein (203 aa).

Residues 9–29 form a helical membrane-spanning segment; the sequence is LVVLFTIVTFGLVSPPAALMA.

It localises to the membrane. This is an uncharacterized protein from Bacillus subtilis (strain 168).